The chain runs to 698 residues: Probable metal-nicotianamine transporter YSL17 (698 aa).

The segment at 1-36 (MAEEARGGQRVVVDDDREDASSVASSTERAFEGEPL) is disordered. 14 helical membrane-spanning segments follow: residues 43-63 (VTAR…VVAM), 67-87 (LTSG…FFLA), 114-134 (IAVV…YILG), 157-177 (IGRV…IIVP), 216-236 (VVTL…QWFF), 277-297 (MITA…WPYI), 322-342 (VFVG…SALV), 395-415 (WVAV…VPLL), 424-444 (VAAA…GVGV), 463-483 (SWVG…GIIV), 511-531 (VGQV…FWVF), 567-587 (LPDH…ALSA), 607-627 (IGVA…AVGC), and 644-664 (LLLP…SLAS).

It belongs to the YSL (TC 2.A.67.2) family. As to expression, expressed at low levels in roots.

The protein resides in the membrane. In terms of biological role, may be involved in the transport of nicotianamine-chelated metals. The protein is Probable metal-nicotianamine transporter YSL17 (YSL17) of Oryza sativa subsp. japonica (Rice).